The primary structure comprises 194 residues: NADH-quinone oxidoreductase subunit B (194 aa).

Positions 73, 74, 138, and 168 each coordinate [4Fe-4S] cluster.

The protein belongs to the complex I 20 kDa subunit family. As to quaternary structure, NDH-1 is composed of 14 different subunits. Subunits NuoB, C, D, E, F, and G constitute the peripheral sector of the complex. [4Fe-4S] cluster serves as cofactor.

The protein resides in the cell inner membrane. The catalysed reaction is a quinone + NADH + 5 H(+)(in) = a quinol + NAD(+) + 4 H(+)(out). NDH-1 shuttles electrons from NADH, via FMN and iron-sulfur (Fe-S) centers, to quinones in the respiratory chain. The immediate electron acceptor for the enzyme in this species is believed to be ubiquinone. Couples the redox reaction to proton translocation (for every two electrons transferred, four hydrogen ions are translocated across the cytoplasmic membrane), and thus conserves the redox energy in a proton gradient. This chain is NADH-quinone oxidoreductase subunit B, found in Rhizobium johnstonii (strain DSM 114642 / LMG 32736 / 3841) (Rhizobium leguminosarum bv. viciae).